We begin with the raw amino-acid sequence, 66 residues long: Large ribosomal subunit protein bL35 (66 aa).

Belongs to the bacterial ribosomal protein bL35 family.

In Neorickettsia sennetsu (strain ATCC VR-367 / Miyayama) (Ehrlichia sennetsu), this protein is Large ribosomal subunit protein bL35.